The primary structure comprises 397 residues: Tryptophan synthase beta chain (397 aa).

Residue lysine 87 is modified to N6-(pyridoxal phosphate)lysine.

It belongs to the TrpB family. As to quaternary structure, tetramer of two alpha and two beta chains. Pyridoxal 5'-phosphate is required as a cofactor.

The catalysed reaction is (1S,2R)-1-C-(indol-3-yl)glycerol 3-phosphate + L-serine = D-glyceraldehyde 3-phosphate + L-tryptophan + H2O. It participates in amino-acid biosynthesis; L-tryptophan biosynthesis; L-tryptophan from chorismate: step 5/5. Its function is as follows. The beta subunit is responsible for the synthesis of L-tryptophan from indole and L-serine. This chain is Tryptophan synthase beta chain, found in Shigella boydii serotype 18 (strain CDC 3083-94 / BS512).